The chain runs to 137 residues: Probable Hsp20 family chaperone (137 aa).

One can recognise a sHSP domain in the interval 25-137 (LTNNNNIMKT…PKEKHYIKLN (113 aa)).

This sequence belongs to the small heat shock protein (HSP20) family.

Its function is as follows. Probable chaperone. The protein is Probable Hsp20 family chaperone of Onion yellows phytoplasma (strain OY-M).